The sequence spans 603 residues: Spastin (603 aa).

The disordered stretch occupies residues 1–34 (MNSPGGRNNKKKPVTPAAETGPGPPTPPPPPAET). Over 1–54 (MNSPGGRNNKKKPVTPAAETGPGPPTPPPPPAETQVLLAPPSLHKRNLYLFSYP) the chain is Cytoplasmic. Residues 22–32 (PGPPTPPPPPA) show a composition bias toward pro residues. The segment at residues 55–75 (LLAAFSLLRFLAFQLGLLFVW) is an intramembrane region (helical). Over 76–603 (FCERLSRRVM…WNKEFGDTTV (528 aa)) the chain is Cytoplasmic. In terms of domain architecture, MIT spans 113-188 (YHQQAFQYIS…LMAKDRLQLL (76 aa)). The tract at residues 216 to 294 (GLLKPEKGAV…RTNKPTTPTT (79 aa)) is disordered. Over residues 219 to 231 (KPEKGAVPKKKDP) the composition is skewed to basic and acidic residues. Residues 281-294 (KNNTRTNKPTTPTT) show a composition bias toward low complexity. 369-376 (GPPGNGKT) contacts ATP.

Belongs to the AAA ATPase family. Spastin subfamily. In terms of assembly, homohexamer. The homohexamer is stabilized by ATP-binding. The homohexamer may adopt a ring conformation through which microtubules pass prior to being severed. Interacts with microtubules.

It is found in the membrane. It localises to the cytoplasm. The protein resides in the cytoskeleton. The protein localises to the microtubule organizing center. Its subcellular location is the centrosome. It is found in the perinuclear region. It localises to the nucleus. The enzyme catalyses n ATP + n H2O + a microtubule = n ADP + n phosphate + (n+1) alpha/beta tubulin heterodimers.. Its function is as follows. ATP-dependent microtubule severing protein that specifically recognizes and cuts microtubules that are polyglutamylated. Preferentially recognizes and acts on microtubules decorated with short polyglutamate tails: severing activity increases as the number of glutamates per tubulin rises from one to eight, but decreases beyond this glutamylation threshold. Microtubule severing promotes reorganization of cellular microtubule arrays and the release of microtubules from the centrosome following nucleation. Required for membrane traffic from the endoplasmic reticulum (ER) to the Golgi and for completion of the abscission stage of cytokinesis. Also plays a role in axon growth and the formation of axonal branches. The protein is Spastin of Xenopus tropicalis (Western clawed frog).